The following is a 142-amino-acid chain: Large ribosomal subunit protein mL42 (142 aa).

The transit peptide at 1–32 directs the protein to the mitochondrion; sequence MAVAAVKWVMSKRTILKHLFPVQNGALYCVCH.

This sequence belongs to the mitochondrion-specific ribosomal protein mL42 family. Component of the mitochondrial large ribosomal subunit (mt-LSU). Mature mammalian 55S mitochondrial ribosomes consist of a small (28S) and a large (39S) subunit. The 28S small subunit contains a 12S ribosomal RNA (12S mt-rRNA) and 30 different proteins. The 39S large subunit contains a 16S rRNA (16S mt-rRNA), a copy of mitochondrial valine transfer RNA (mt-tRNA(Val)), which plays an integral structural role, and 52 different proteins.

It is found in the mitochondrion. The protein is Large ribosomal subunit protein mL42 (MRPL42) of Homo sapiens (Human).